We begin with the raw amino-acid sequence, 901 residues long: PGC-1 and ERR-induced regulator in muscle protein 1 (901 aa).

Disordered stretches follow at residues 29 to 511 (QAGL…MPAS), 564 to 671 (SLEG…MGPG), and 731 to 752 (RHQEGRSQAPLLKAGSVPAPPP). The segment covering 100-112 (GQQTPSTSAQSEA) has biased composition (polar residues). The segment covering 157 to 178 (GEPAGSPESPVHSAAPQRSPGS) has biased composition (low complexity). Composition is skewed to polar residues over residues 267 to 276 (LSTSVSTTEQ), 347 to 379 (DESQSTSAFNAQPNEPQSTPTFSPQPDEPQSTP), 387 to 418 (EPQSTSAFNAQPNEPQSTLAFSPQPDEPQSTP), 426 to 457 (EPQSTPAFNVQPNEPQSTPAFSPQPNEPQSTP), and 465 to 484 (EPQSTPAFNTQPNEPQSTPT). Over residues 608–624 (PSSEEPGSGEVSGPLSP) the composition is skewed to low complexity.

The protein resides in the cytoplasm. Its subcellular location is the nucleus. Regulates the expression of selective PPARGC1A/B and ESRRA/B/G target genes with roles in glucose and lipid metabolism, energy transfer, contractile function, muscle mitochondrial biogenesis and oxidative capacity. Required for the efficient induction of MT-CO2, MT-CO3, COX4I1, TFB1M, TFB2M, POLRMT and SIRT3 by PPARGC1A. Positively regulates the PPARGC1A/ESRRG-induced expression of CKMT2, TNNI3 and SLC2A4 and negatively regulates the PPARGC1A/ESRRG-induced expression of PDK4. The protein is PGC-1 and ERR-induced regulator in muscle protein 1 (PERM1) of Bos taurus (Bovine).